A 473-amino-acid chain; its full sequence is UDP-N-acetylmuramate--L-alanine ligase (473 aa).

112 to 118 (GTHGKTT) lines the ATP pocket.

The protein belongs to the MurCDEF family.

The protein localises to the cytoplasm. It carries out the reaction UDP-N-acetyl-alpha-D-muramate + L-alanine + ATP = UDP-N-acetyl-alpha-D-muramoyl-L-alanine + ADP + phosphate + H(+). It functions in the pathway cell wall biogenesis; peptidoglycan biosynthesis. Cell wall formation. This is UDP-N-acetylmuramate--L-alanine ligase from Nitrosomonas europaea (strain ATCC 19718 / CIP 103999 / KCTC 2705 / NBRC 14298).